The sequence spans 214 residues: Thymidylate kinase (214 aa).

Gly-13–Ser-20 provides a ligand contact to ATP.

Belongs to the thymidylate kinase family.

The enzyme catalyses dTMP + ATP = dTDP + ADP. Phosphorylation of dTMP to form dTDP in both de novo and salvage pathways of dTTP synthesis. The sequence is that of Thymidylate kinase from Malacoplasma penetrans (strain HF-2) (Mycoplasma penetrans).